The following is a 258-amino-acid chain: Hydroxypyruvate isomerase (258 aa).

Catalysis depends on proton donor/acceptor residues E143 and E240.

Belongs to the hyi family. As to quaternary structure, homodimer.

It carries out the reaction 3-hydroxypyruvate = 2-hydroxy-3-oxopropanoate. Not stimulated by addition of pyridoxal 5'-phosphate (0.1 mM), FAD, NAD(+), NADP(+) or ATP (1 mM each). EDTA (10 mM) and metal ions (1 mM) such as Ca(2+), Co(2+), Mg(2+), Ni(2+), Zn(2+) do not affect the enzyme activity. Catalyzes the reversible isomerization between hydroxypyruvate and 2-hydroxy-3-oxopropanoate (also termed tartronate semialdehyde). Does not catalyze the isomerization of D-fructose to D-glucose or that of D-xylulose to D-xylose. Also does not catalyze racemization of serine, alanine, glycerate or lactate. In Escherichia coli (strain K12), this protein is Hydroxypyruvate isomerase (hyi).